A 312-amino-acid chain; its full sequence is tRNA uridine(34) hydroxylase (312 aa).

The Rhodanese domain maps to 123-217 (SDPEVLLIDT…YLEEVPQEQS (95 aa)). The active-site Cysteine persulfide intermediate is the Cys-177. Residues 282–293 (ARERQKQIELAR) show a composition bias toward basic and acidic residues. The tract at residues 282 to 312 (ARERQKQIELARQRNQPHPLGRDPRQSTLEN) is disordered.

It belongs to the TrhO family.

It carries out the reaction uridine(34) in tRNA + AH2 + O2 = 5-hydroxyuridine(34) in tRNA + A + H2O. In terms of biological role, catalyzes oxygen-dependent 5-hydroxyuridine (ho5U) modification at position 34 in tRNAs. The polypeptide is tRNA uridine(34) hydroxylase (Pseudomonas aeruginosa (strain UCBPP-PA14)).